A 614-amino-acid polypeptide reads, in one-letter code: Zinc finger and SCAN domain-containing protein 2 (614 aa).

Disordered regions lie at residues 1–25, 42–73, and 162–200; these read MAAE…EDEQ, AVLQ…EGPQ, and NISG…RVVP. The 59-residue stretch at 69–127 folds into the SCAN box domain; it reads AEGPQGALVRFRELCRRWLRPEVHTKEQMLTVLPREIQAWLQEHRPESSEEAVALVEDL. 14 consecutive C2H2-type zinc fingers follow at residues 222 to 244, 250 to 272, 278 to 300, 306 to 328, 334 to 356, 362 to 384, 390 to 412, 418 to 440, 446 to 468, 474 to 496, 502 to 524, 530 to 552, 558 to 580, and 586 to 608; these read YECP…ERTH, YKCD…QTTH, YKCR…QRIH, FQCA…QRTH, YSCP…QGIH, YACK…QRIH, YKCT…RRTH, YQCG…RRTH, YKCG…QGTH, YECL…QRTH, YRCG…QRTH, YKCL…QRAH, YRCP…QRIH, and YRCP…QRTH.

It belongs to the krueppel C2H2-type zinc-finger protein family. In the adult, predominantly found in spermatids. Also present in the embryo.

The protein resides in the nucleus. Its function is as follows. May be involved in transcriptional regulation during the post-meiotic stages of spermatogenesis. The sequence is that of Zinc finger and SCAN domain-containing protein 2 (Zscan2) from Mus musculus (Mouse).